The sequence spans 882 residues: Translation initiation factor IF-2 (882 aa).

Disordered regions lie at residues 95–176 (PSVT…ASSL) and 229–289 (EHAR…SALQ). A compositionally biased stretch (polar residues) spans 116–133 (TKNTFSQESLNKTSPQKS). 2 stretches are compositionally biased toward basic and acidic residues: residues 137–172 (KAIE…REAE) and 229–246 (EHAR…EGDR). A compositionally biased stretch (basic residues) spans 247–262 (RSRHRGTKTTKQKKTN). A compositionally biased stretch (basic and acidic residues) spans 263–276 (KLSESKTDREEARA). A tr-type G domain is found at 382 to 551 (HRAPVVTIMG…LLQAEVLELK (170 aa)). The tract at residues 391–398 (GHVDHGKT) is G1. GTP is bound at residue 391–398 (GHVDHGKT). The interval 416–420 (GITQH) is G2. Residues 437–440 (DTPG) form a G3 region. GTP contacts are provided by residues 437 to 441 (DTPGH) and 491 to 494 (NKID). The G4 stretch occupies residues 491–494 (NKID). Positions 527 to 529 (SAK) are G5.

Belongs to the TRAFAC class translation factor GTPase superfamily. Classic translation factor GTPase family. IF-2 subfamily.

It localises to the cytoplasm. Its function is as follows. One of the essential components for the initiation of protein synthesis. Protects formylmethionyl-tRNA from spontaneous hydrolysis and promotes its binding to the 30S ribosomal subunits. Also involved in the hydrolysis of GTP during the formation of the 70S ribosomal complex. In Hamiltonella defensa subsp. Acyrthosiphon pisum (strain 5AT), this protein is Translation initiation factor IF-2.